An 80-amino-acid polypeptide reads, in one-letter code: MAGGPRRGGRRRKKVCYFTANGITHIDYKDTELLKRFISERGKILPRRVTGTSAKYQRMLTTAIKRARHMALLPYVKDEN.

It belongs to the bacterial ribosomal protein bS18 family. In terms of assembly, part of the 30S ribosomal subunit. Forms a tight heterodimer with protein bS6.

In terms of biological role, binds as a heterodimer with protein bS6 to the central domain of the 16S rRNA, where it helps stabilize the platform of the 30S subunit. The protein is Small ribosomal subunit protein bS18 of Staphylococcus haemolyticus (strain JCSC1435).